Here is a 192-residue protein sequence, read N- to C-terminus: GTP cyclohydrolase 1 (192 aa).

Cys82, His85, and Cys153 together coordinate Zn(2+).

Belongs to the GTP cyclohydrolase I family. As to quaternary structure, toroid-shaped homodecamer, composed of two pentamers of five dimers.

The enzyme catalyses GTP + H2O = 7,8-dihydroneopterin 3'-triphosphate + formate + H(+). It functions in the pathway cofactor biosynthesis; 7,8-dihydroneopterin triphosphate biosynthesis; 7,8-dihydroneopterin triphosphate from GTP: step 1/1. In Rickettsia bellii (strain OSU 85-389), this protein is GTP cyclohydrolase 1.